The primary structure comprises 207 residues: Holliday junction branch migration complex subunit RuvA (207 aa).

The domain I stretch occupies residues 1–65 (MYDYIRGILT…ETEHVLYGFS (65 aa)). The tract at residues 66–144 (SRRERECFRM…DLLPLDSKAI (79 aa)) is domain II. The tract at residues 145–155 (ASWESVKPSCM) is flexible linker. Residues 155–207 (MDEGIQALAALGYSKPSAERMIAEAMSELPENASLAEILPIALKKNLQGLNKS) form a domain III region.

It belongs to the RuvA family. Homotetramer. Forms an RuvA(8)-RuvB(12)-Holliday junction (HJ) complex. HJ DNA is sandwiched between 2 RuvA tetramers; dsDNA enters through RuvA and exits via RuvB. An RuvB hexamer assembles on each DNA strand where it exits the tetramer. Each RuvB hexamer is contacted by two RuvA subunits (via domain III) on 2 adjacent RuvB subunits; this complex drives branch migration. In the full resolvosome a probable DNA-RuvA(4)-RuvB(12)-RuvC(2) complex forms which resolves the HJ.

It localises to the cytoplasm. In terms of biological role, the RuvA-RuvB-RuvC complex processes Holliday junction (HJ) DNA during genetic recombination and DNA repair, while the RuvA-RuvB complex plays an important role in the rescue of blocked DNA replication forks via replication fork reversal (RFR). RuvA specifically binds to HJ cruciform DNA, conferring on it an open structure. The RuvB hexamer acts as an ATP-dependent pump, pulling dsDNA into and through the RuvAB complex. HJ branch migration allows RuvC to scan DNA until it finds its consensus sequence, where it cleaves and resolves the cruciform DNA. The protein is Holliday junction branch migration complex subunit RuvA of Chlamydia caviae (strain ATCC VR-813 / DSM 19441 / 03DC25 / GPIC) (Chlamydophila caviae).